We begin with the raw amino-acid sequence, 675 residues long: Zeaxanthin epoxidase, chloroplastic (675 aa).

Residues 1–25 (MASTVLYNSLTTSTTVFLRSHLPIS) constitute a chloroplast transit peptide. FAD is bound by residues 92–120 (RILV…KVFE) and 370–383 (KLTW…LLGD). Residues 558–622 (ICLSRKEDEP…HGTWITDNEG (65 aa)) enclose the FHA domain.

It depends on FAD as a cofactor.

It localises to the plastid. It is found in the chloroplast thylakoid membrane. It carries out the reaction all-trans-zeaxanthin + 4 reduced [2Fe-2S]-[ferredoxin] + 2 O2 + 4 H(+) = all-trans-violaxanthin + 4 oxidized [2Fe-2S]-[ferredoxin] + 2 H2O. The protein operates within plant hormone biosynthesis; abscisate biosynthesis. Inhibited by diphenyleneiodonium (DPI). In terms of biological role, converts zeaxanthin into antheraxanthin and subsequently violaxanthin. Involved in the epoxidation of zeaxanthin. In Spinacia oleracea (Spinach), this protein is Zeaxanthin epoxidase, chloroplastic.